The primary structure comprises 333 residues: NADH-quinone oxidoreductase subunit H (333 aa).

8 consecutive transmembrane segments (helical) span residues 15 to 35 (FFIF…FVTY), 88 to 108 (FILA…VIPF), 117 to 137 (IGVG…GVLT), 159 to 179 (ISYE…TGSL), 191 to 211 (VWYI…AVAE), 241 to 261 (FFML…TVLF), 273 to 293 (FIPG…LFIW), and 313 to 333 (VLLP…ELFF).

Belongs to the complex I subunit 1 family. NDH-1 is composed of 14 different subunits. Subunits NuoA, H, J, K, L, M, N constitute the membrane sector of the complex.

The protein resides in the cell membrane. It carries out the reaction a quinone + NADH + 5 H(+)(in) = a quinol + NAD(+) + 4 H(+)(out). NDH-1 shuttles electrons from NADH, via FMN and iron-sulfur (Fe-S) centers, to quinones in the respiratory chain. The immediate electron acceptor for the enzyme in this species is believed to be ubiquinone. Couples the redox reaction to proton translocation (for every two electrons transferred, four hydrogen ions are translocated across the cytoplasmic membrane), and thus conserves the redox energy in a proton gradient. This subunit may bind ubiquinone. The protein is NADH-quinone oxidoreductase subunit H of Bacillus cytotoxicus (strain DSM 22905 / CIP 110041 / 391-98 / NVH 391-98).